Reading from the N-terminus, the 100-residue chain is Acylphosphatase (100 aa).

The Acylphosphatase-like domain occupies 14 to 100; sequence RWRFFVEGKV…TGADWFEIRS (87 aa). Residues Arg29 and Asn47 contribute to the active site.

It belongs to the acylphosphatase family.

It catalyses the reaction an acyl phosphate + H2O = a carboxylate + phosphate + H(+). The polypeptide is Acylphosphatase (acyP) (Synechococcus sp. (strain WH7803)).